The chain runs to 146 residues: MSGKIIDKVKVFMGFDVFEDEEVEEEETVEIEDELVPVMNSKRNKVVNIHTTTQMKVVLYEPTNFEEAPNIVDNLKNRKPVIINLENIEPDLAKKFFDFLNGAIYALDGNIQKVSSGIFILAPNNVDISGNIKEELKNKGVFPWQK.

This sequence belongs to the SepF family. In terms of assembly, homodimer. Interacts with FtsZ.

The protein resides in the cytoplasm. Its function is as follows. Cell division protein that is part of the divisome complex and is recruited early to the Z-ring. Probably stimulates Z-ring formation, perhaps through the cross-linking of FtsZ protofilaments. Its function overlaps with FtsA. The protein is Cell division protein SepF of Alkaliphilus oremlandii (strain OhILAs) (Clostridium oremlandii (strain OhILAs)).